The primary structure comprises 736 residues: Zinc finger MYND domain-containing protein 15 (736 aa).

Disordered stretches follow at residues 70–94 and 109–192; these read SLGQGAEPGPGPGLGASRLLGDEPP and LEDG…KNAE. Residues 110 to 123 show a composition bias toward acidic residues; it reads EDGEEGEEEEEDEE. Composition is skewed to basic and acidic residues over residues 124-135 and 165-185; these read HGERPGMEKVEP and ASREEGSREERPEDERAPEKR. Zn(2+) contacts are provided by Cys307, Cys310, Cys322, Cys325, Cys331, Cys335, His349, and Cys353. The MYND-type zinc finger occupies 307–353; that stretch reads CHVCHKHSFEVKLTPCPQCSAVLYCGEACLQADWRRCPDDVSHRFWC. Disordered regions lie at residues 556 to 583 and 696 to 736; these read DGPEVSLRPGSGVSARFNSGTKEKGGRR and GGTV…RRRR. Over residues 704–718 the composition is skewed to pro residues; sequence GPAPRPPTPAAPPVP. Basic residues predominate over residues 719–736; sequence ARRRRGEKKAARGPRRRR.

In terms of assembly, interacts with HDAC1, HDAC3, HDAC6 and, to a lesser extent, with HDAC7. In terms of tissue distribution, testis-specific. Expressed in pachytene spermatocytes and all developing spermatids, but not in Sertoli, nor Leydig cells (at protein level).

The protein localises to the nucleus. It localises to the cytoplasm. In terms of biological role, acts as a transcriptional repressor through interaction with histone deacetylases (HDACs). May regulate haploid genes important for spermiogenesis. The sequence is that of Zinc finger MYND domain-containing protein 15 (Zmynd15) from Mus musculus (Mouse).